The sequence spans 447 residues: Methylenetetrahydrofolate--tRNA-(uracil-5-)-methyltransferase TrmFO (447 aa).

13-18 (GAGLAG) lines the FAD pocket.

Belongs to the MnmG family. TrmFO subfamily. FAD is required as a cofactor.

Its subcellular location is the cytoplasm. It catalyses the reaction uridine(54) in tRNA + (6R)-5,10-methylene-5,6,7,8-tetrahydrofolate + NADH + H(+) = 5-methyluridine(54) in tRNA + (6S)-5,6,7,8-tetrahydrofolate + NAD(+). The enzyme catalyses uridine(54) in tRNA + (6R)-5,10-methylene-5,6,7,8-tetrahydrofolate + NADPH + H(+) = 5-methyluridine(54) in tRNA + (6S)-5,6,7,8-tetrahydrofolate + NADP(+). In terms of biological role, catalyzes the folate-dependent formation of 5-methyl-uridine at position 54 (M-5-U54) in all tRNAs. The chain is Methylenetetrahydrofolate--tRNA-(uracil-5-)-methyltransferase TrmFO from Streptococcus thermophilus (strain ATCC BAA-491 / LMD-9).